A 461-amino-acid chain; its full sequence is Elongation factor 1-alpha, oocyte form (461 aa).

N,N,N-trimethylglycine is present on Gly-2. One can recognise a tr-type G domain in the interval 5–242; sequence KIHINIVVIG…DCIIPPQRPT (238 aa). The interval 14-21 is G1; that stretch reads GHVDSGKS. 14 to 21 lines the GTP pocket; that stretch reads GHVDSGKS. The G2 stretch occupies residues 70-74; the sequence is GITID. Residues 91-94 form a G3 region; the sequence is DAPG. GTP contacts are provided by residues 91–95 and 153–156; these read DAPGH and NKMD. Residues 153-156 form a G4 region; it reads NKMD. Positions 194-196 are G5; that stretch reads SGW. 2 positions are modified to 5-glutamyl glycerylphosphorylethanolamine: Glu-301 and Glu-374.

This sequence belongs to the TRAFAC class translation factor GTPase superfamily. Classic translation factor GTPase family. EF-Tu/EF-1A subfamily. Oocyte.

Its subcellular location is the cytoplasm. In terms of biological role, this protein promotes the GTP-dependent binding of aminoacyl-tRNA to the A-site of ribosomes during protein biosynthesis. The chain is Elongation factor 1-alpha, oocyte form from Xenopus laevis (African clawed frog).